The sequence spans 31 residues: GVIPCGESCVFIPCISAAIGCSCKNKVCYRN.

Positions 1 to 31 (GVIPCGESCVFIPCISAAIGCSCKNKVCYRN) form a cross-link, cyclopeptide (Gly-Asn). Disulfide bonds link C5–C21, C9–C23, and C14–C28.

Post-translationally, this is a cyclic peptide.

Probably participates in a plant defense mechanism. Has anti-HIV activity. The sequence is that of Cycloviolin-A from Leonia cymosa (Sacha uba).